The sequence spans 192 residues: Pyruvate synthase subunit PorC (192 aa).

Heterotetramer of one alpha, one beta, one delta and one gamma chain.

The catalysed reaction is 2 oxidized [2Fe-2S]-[ferredoxin] + pyruvate + CoA = 2 reduced [2Fe-2S]-[ferredoxin] + acetyl-CoA + CO2 + H(+). This Thermotoga maritima (strain ATCC 43589 / DSM 3109 / JCM 10099 / NBRC 100826 / MSB8) protein is Pyruvate synthase subunit PorC (porC).